The primary structure comprises 152 residues: Lipoprotein signal peptidase (152 aa).

The next 2 helical transmembrane spans lie at 55-75 (NKMW…VFYM) and 85-105 (LGIS…DRVF). Active-site residues include Asp111 and Asp129. Residues 124-144 (VFNIADSALCIGVVLIIIQTL) form a helical membrane-spanning segment.

It belongs to the peptidase A8 family.

The protein resides in the cell membrane. The catalysed reaction is Release of signal peptides from bacterial membrane prolipoproteins. Hydrolyzes -Xaa-Yaa-Zaa-|-(S,diacylglyceryl)Cys-, in which Xaa is hydrophobic (preferably Leu), and Yaa (Ala or Ser) and Zaa (Gly or Ala) have small, neutral side chains.. Its pathway is protein modification; lipoprotein biosynthesis (signal peptide cleavage). Functionally, this protein specifically catalyzes the removal of signal peptides from prolipoproteins. This is Lipoprotein signal peptidase from Bacillus cytotoxicus (strain DSM 22905 / CIP 110041 / 391-98 / NVH 391-98).